We begin with the raw amino-acid sequence, 226 residues long: 7-cyano-7-deazaguanine synthase (226 aa).

10–20 (FSGGQDSTTLA) is a binding site for ATP. C190, C205, C208, and C211 together coordinate Zn(2+).

It belongs to the QueC family. Requires Zn(2+) as cofactor.

It catalyses the reaction 7-carboxy-7-deazaguanine + NH4(+) + ATP = 7-cyano-7-deazaguanine + ADP + phosphate + H2O + H(+). Its pathway is purine metabolism; 7-cyano-7-deazaguanine biosynthesis. Catalyzes the ATP-dependent conversion of 7-carboxy-7-deazaguanine (CDG) to 7-cyano-7-deazaguanine (preQ(0)). In Helicobacter pylori (strain ATCC 700392 / 26695) (Campylobacter pylori), this protein is 7-cyano-7-deazaguanine synthase.